The sequence spans 406 residues: tRNA-specific 2-thiouridylase MnmA (406 aa).

ATP-binding positions include 42 to 49 (GLSGGVDS) and Leu68. Catalysis depends on Cys129, which acts as the Nucleophile. A disulfide bridge connects residues Cys129 and Cys239. Residue Gly154 participates in ATP binding. An interaction with tRNA region spans residues 189 to 191 (KDQ). Cys239 acts as the Cysteine persulfide intermediate in catalysis. Residues 344-345 (RY) form an interaction with tRNA region.

The protein belongs to the MnmA/TRMU family.

It is found in the cytoplasm. The catalysed reaction is S-sulfanyl-L-cysteinyl-[protein] + uridine(34) in tRNA + AH2 + ATP = 2-thiouridine(34) in tRNA + L-cysteinyl-[protein] + A + AMP + diphosphate + H(+). Functionally, catalyzes the 2-thiolation of uridine at the wobble position (U34) of tRNA, leading to the formation of s(2)U34. This is tRNA-specific 2-thiouridylase MnmA from Prochlorococcus marinus (strain SARG / CCMP1375 / SS120).